The sequence spans 237 residues: Undecaprenyl-diphosphatase (237 aa).

Transmembrane regions (helical) follow at residues 38-58, 65-85, 92-112, 126-146, 166-186, 191-211, and 217-237; these read QTAVLHLGTLVSVVLFALDGI, WRIILNLIVSTIPAGVFGVLF, LFSSPRFLPLFFSATALILMF, MSFLDALLVGIAQLFALFPGI, ALQYSFLMSIPVVLGAGILGL, VTILAPIFAFLSGLFALYVLS, and GKIWQFSYYCLFVAILSYLAG.

This sequence belongs to the UppP family.

Its subcellular location is the cell inner membrane. The catalysed reaction is di-trans,octa-cis-undecaprenyl diphosphate + H2O = di-trans,octa-cis-undecaprenyl phosphate + phosphate + H(+). Its function is as follows. Catalyzes the dephosphorylation of undecaprenyl diphosphate (UPP). Confers resistance to bacitracin. The protein is Undecaprenyl-diphosphatase of Thermotoga maritima (strain ATCC 43589 / DSM 3109 / JCM 10099 / NBRC 100826 / MSB8).